The primary structure comprises 1937 residues: Myosin-2 (1937 aa).

The Myosin N-terminal SH3-like domain maps to 33–82; the sequence is DAKTSVFVAEPKESFVKGTIQSREGGKVTVKTDAGATLTVKEDQVFPMNP. 2 positions are modified to phosphothreonine: Thr64 and Thr69. The Myosin motor domain occupies 86–780; that stretch reads DKIEDMAMMT…LLGLLEEMRD (695 aa). An N6,N6,N6-trimethyllysine modification is found at Lys130. 179-186 contributes to the ATP binding site; that stretch reads GESGAGKT. A Phosphotyrosine modification is found at Tyr387. At Thr417 the chain carries Phosphothreonine. Ser623 carries the phosphoserine modification. The segment at 657–679 is actin-binding; the sequence is LNKLMTNLRSTHPHFVRCIIPNE. The residue at position 755 (His755) is a Pros-methylhistidine. The segment at 759–773 is actin-binding; the sequence is KFGHTKVFFKAGLLG. The IQ domain maps to 783–812; it reads LAQIITRTQARCRGFLARVEYQKMVERRES. Residues 841 to 1937 adopt a coiled-coil conformation; the sequence is LLKSAETEKE…EVHTKIISEE (1097 aa). Ser1094 carries the post-translational modification Phosphoserine. 2 disordered regions span residues 1124-1145 and 1151-1170; these read IEAERASRAKAEKQRSDLSREL and RLEEAGGATSAQIEMNKKRE. Positions 1126-1145 are enriched in basic and acidic residues; that stretch reads AERASRAKAEKQRSDLSREL. Phosphoserine is present on residues Ser1160 and Ser1235. Phosphothreonine is present on Thr1239. Position 1241 is a phosphoserine (Ser1241). Position 1253 is a phosphothreonine (Thr1253). The residue at position 1259 (Ser1259) is a Phosphoserine. Phosphothreonine is present on Thr1284. Residues Ser1290, Ser1301, and Ser1304 each carry the phosphoserine modification. Tyr1462 carries the post-translational modification Phosphotyrosine. The residue at position 1465 (Thr1465) is a Phosphothreonine. At Ser1472 the chain carries Phosphoserine. A Phosphotyrosine modification is found at Tyr1490. At Ser1493 the chain carries Phosphoserine. Thr1499 carries the post-translational modification Phosphothreonine. Ser1512 carries the phosphoserine modification. Thr1515 carries the phosphothreonine modification. Ser1540, Ser1552, Ser1572, Ser1712, and Ser1724 each carry phosphoserine. 2 positions are modified to phosphothreonine: Thr1728 and Thr1734. Ser1737 is subject to Phosphoserine. The disordered stretch occupies residues 1883 to 1913; sequence QAEEAEEQSNTNLSKFRKLQHELEEAEERAD.

Belongs to the TRAFAC class myosin-kinesin ATPase superfamily. Myosin family. Muscle myosin is a hexameric protein that consists of 2 heavy chain subunits (MHC), 2 alkali light chain subunits (MLC) and 2 regulatory light chain subunits (MLC-2). Interacts with GCSAM.

It is found in the cytoplasm. The protein localises to the myofibril. Functionally, myosins are actin-based motor molecules with ATPase activity essential for muscle contraction. This Equus caballus (Horse) protein is Myosin-2 (MYH2).